A 130-amino-acid polypeptide reads, in one-letter code: Glycine cleavage system H protein (130 aa).

Positions 24–106 (GIKVGISAFA…YQEGWLLKIT (83 aa)) constitute a Lipoyl-binding domain. Residue K65 is modified to N6-lipoyllysine.

Belongs to the GcvH family. In terms of assembly, the glycine cleavage system is composed of four proteins: P, T, L and H. Requires (R)-lipoate as cofactor.

The glycine cleavage system catalyzes the degradation of glycine. The H protein shuttles the methylamine group of glycine from the P protein to the T protein. This is Glycine cleavage system H protein from Synechococcus sp. (strain RCC307).